The chain runs to 245 residues: Eukaryotic translation initiation factor 3 subunit K (245 aa).

Positions 46 to 227 (YDCYANLALL…EAKGTVVREN (182 aa)) constitute a PCI domain.

The protein belongs to the eIF-3 subunit K family. Component of the eukaryotic translation initiation factor 3 (eIF-3) complex.

It localises to the cytoplasm. Component of the eukaryotic translation initiation factor 3 (eIF-3) complex, which is involved in protein synthesis of a specialized repertoire of mRNAs and, together with other initiation factors, stimulates binding of mRNA and methionyl-tRNAi to the 40S ribosome. The eIF-3 complex specifically targets and initiates translation of a subset of mRNAs involved in cell proliferation. This is Eukaryotic translation initiation factor 3 subunit K from Sclerotinia sclerotiorum (strain ATCC 18683 / 1980 / Ss-1) (White mold).